Consider the following 114-residue polypeptide: Putative pterin-4-alpha-carbinolamine dehydratase (114 aa).

The protein belongs to the pterin-4-alpha-carbinolamine dehydratase family.

The catalysed reaction is (4aS,6R)-4a-hydroxy-L-erythro-5,6,7,8-tetrahydrobiopterin = (6R)-L-erythro-6,7-dihydrobiopterin + H2O. The sequence is that of Putative pterin-4-alpha-carbinolamine dehydratase from Pseudoalteromonas translucida (strain TAC 125).